Consider the following 347-residue polypeptide: Olfactory receptor 13C3 (347 aa).

The Extracellular segment spans residues 1–55 (MIVQLICTVCFLAVNTFHVRSSFDFLKADDMGEINQTLVSEFLLLGLSGYPKIEI). An N-linked (GlcNAc...) asparagine glycan is attached at Asn-35. A helical transmembrane segment spans residues 56–76 (VYFALILVMYLVILIGNGVLI). The Cytoplasmic segment spans residues 77–84 (IASIFDSH). The helical transmembrane segment at 85 to 105 (FHTPMYFFLGNLSFLDICYTS) threads the bilayer. The Extracellular segment spans residues 106 to 129 (SSVPSTLVSLISKKRNISFSGCAV). A disulfide bridge connects residues Cys-127 and Cys-219. The helical transmembrane segment at 130–150 (QMFFGFAMGSTECLLLGMMAF) threads the bilayer. Over 151-169 (DRYVAICNPLRYPIILSKV) the chain is Cytoplasmic. The chain crosses the membrane as a helical span at residues 170–190 (AYVLMASVSWLSGGINSAVQT). The Extracellular portion of the chain corresponds to 191–227 (LLAMRLPFCGNNIINHFACEILAVLKLACADISLNII). The chain crosses the membrane as a helical span at residues 228–247 (TMVISNMAFLVLPLMVIFFS). Residues 248–267 (YMFILYTILQMNSATGRRKA) are Cytoplasmic-facing. The chain crosses the membrane as a helical span at residues 268–288 (FSTCSAHLTVVIIFYGTIFFM). At 289–307 (YAKPKSQDLIGEEKLQALD) the chain is on the extracellular side. Residues 308-328 (KLISLFYGVVTPMLNPILYSL) traverse the membrane as a helical segment. Over 329–347 (RNKDVKAAVKYLLNKKPIH) the chain is Cytoplasmic.

This sequence belongs to the G-protein coupled receptor 1 family.

It localises to the cell membrane. In terms of biological role, odorant receptor. The chain is Olfactory receptor 13C3 (OR13C3) from Homo sapiens (Human).